Consider the following 1380-residue polypeptide: DNA-directed RNA polymerase subunit beta (1380 aa).

This sequence belongs to the RNA polymerase beta chain family. As to quaternary structure, the RNAP catalytic core consists of 2 alpha, 1 beta, 1 beta' and 1 omega subunit. When a sigma factor is associated with the core the holoenzyme is formed, which can initiate transcription.

The enzyme catalyses RNA(n) + a ribonucleoside 5'-triphosphate = RNA(n+1) + diphosphate. In terms of biological role, DNA-dependent RNA polymerase catalyzes the transcription of DNA into RNA using the four ribonucleoside triphosphates as substrates. This is DNA-directed RNA polymerase subunit beta from Ehrlichia canis (strain Jake).